An 80-amino-acid polypeptide reads, in one-letter code: RNA-binding protein KhpA (80 aa).

Residues 33 to 80 (LEILQLRVASEDVGKVIGKHGRIARALRTLLSASAHASQTRYALEIID) form the KH domain.

This sequence belongs to the KhpA RNA-binding protein family. In terms of assembly, forms a complex with KhpB.

The protein resides in the cytoplasm. A probable RNA chaperone. Forms a complex with KhpB which binds to cellular RNA and controls its expression. Plays a role in peptidoglycan (PG) homeostasis and cell length regulation. This Treponema pallidum (strain Nichols) protein is RNA-binding protein KhpA.